We begin with the raw amino-acid sequence, 210 residues long: Dynein regulatory complex protein 12 (210 aa).

The disordered stretch occupies residues 1-23; the sequence is MPPKNKEKGKKSGAQKKKKNWGA. Positions 7 to 20 are enriched in basic residues; sequence EKGKKSGAQKKKKN. A coiled-coil region spans residues 49–161; the sequence is RDEARRAKAS…EAKYEEILHD (113 aa). The tract at residues 188–210 is disordered; that stretch reads HKEQQRQFGLTPPGSLRPPAPSL.

The protein belongs to the DRC12 family. As to quaternary structure, component of the nexin-dynein regulatory complex (N-DRC).

The protein localises to the cytoplasm. It localises to the cytoskeleton. It is found in the flagellum axoneme. Its function is as follows. Component of the nexin-dynein regulatory complex (N-DRC), a key regulator of ciliary/flagellar motility which maintains the alignment and integrity of the distal axoneme and regulates microtubule sliding in motile axonemes. This Homo sapiens (Human) protein is Dynein regulatory complex protein 12.